A 290-amino-acid chain; its full sequence is tRNA dimethylallyltransferase (290 aa).

11–18 (GPTASGKS) lines the ATP pocket. 13-18 (TASGKS) contributes to the substrate binding site. Interaction with substrate tRNA regions lie at residues 36–39 (DSMQ) and 158–162 (QRIVR).

Belongs to the IPP transferase family. In terms of assembly, monomer. Requires Mg(2+) as cofactor.

The enzyme catalyses adenosine(37) in tRNA + dimethylallyl diphosphate = N(6)-dimethylallyladenosine(37) in tRNA + diphosphate. Its function is as follows. Catalyzes the transfer of a dimethylallyl group onto the adenine at position 37 in tRNAs that read codons beginning with uridine, leading to the formation of N6-(dimethylallyl)adenosine (i(6)A). The protein is tRNA dimethylallyltransferase of Bartonella henselae (strain ATCC 49882 / DSM 28221 / CCUG 30454 / Houston 1) (Rochalimaea henselae).